The following is a 445-amino-acid chain: Putative ubiquitin carboxyl-terminal hydrolase L293 (445 aa).

Positions 133–441 (KALANFGNSC…SAYIILYGDI (309 aa)) constitute a USP domain. Cysteine 142 acts as the Nucleophile in catalysis. The active-site Proton acceptor is histidine 384.

It belongs to the peptidase C19 family.

Its subcellular location is the virion. The enzyme catalyses Thiol-dependent hydrolysis of ester, thioester, amide, peptide and isopeptide bonds formed by the C-terminal Gly of ubiquitin (a 76-residue protein attached to proteins as an intracellular targeting signal).. The polypeptide is Putative ubiquitin carboxyl-terminal hydrolase L293 (Acanthamoeba polyphaga mimivirus (APMV)).